We begin with the raw amino-acid sequence, 91 residues long: Small ribosomal subunit protein uS15 (91 aa).

This sequence belongs to the universal ribosomal protein uS15 family. In terms of assembly, part of the 30S ribosomal subunit. Forms a bridge to the 50S subunit in the 70S ribosome, contacting the 23S rRNA.

In terms of biological role, one of the primary rRNA binding proteins, it binds directly to 16S rRNA where it helps nucleate assembly of the platform of the 30S subunit by binding and bridging several RNA helices of the 16S rRNA. Functionally, forms an intersubunit bridge (bridge B4) with the 23S rRNA of the 50S subunit in the ribosome. This chain is Small ribosomal subunit protein uS15, found in Deinococcus geothermalis (strain DSM 11300 / CIP 105573 / AG-3a).